Reading from the N-terminus, the 143-residue chain is Transcriptional regulator MraZ (143 aa).

SpoVT-AbrB domains lie at 5-47 (EYQH…PQEE) and 76-119 (ASEC…SKSE).

It belongs to the MraZ family. Forms oligomers.

It is found in the cytoplasm. The protein resides in the nucleoid. This chain is Transcriptional regulator MraZ, found in Listeria monocytogenes serotype 4b (strain CLIP80459).